A 607-amino-acid chain; its full sequence is Phosphatidylinositol 4-kinase LSB6 (607 aa).

Residues 73 to 88 (NVPSESPRPDQTSGSN) are compositionally biased toward polar residues. The segment at 73-93 (NVPSESPRPDQTSGSNPAVGL) is disordered. The region spanning 161 to 522 (GRELERIQTG…LVRRTRCQVI (362 aa)) is the PI3K/PI4K catalytic domain. Positions 167–173 (IQTGSSG) are G-loop. Residues 318 to 356 (KSSGEDINHKPETTRNLTDETEPSKQINSSPISTESEEN) form a disordered region. Over residues 319-330 (SSGEDINHKPET) the composition is skewed to basic and acidic residues. The span at 341–351 (SKQINSSPIST) shows a compositional bias: polar residues. The segment at 384–392 (RNTDRGLDN) is catalytic loop. The interval 411 to 431 (AIDNGLSFPWKHPDEWRLYPY) is activation loop.

Belongs to the PI3/PI4-kinase family. As to quaternary structure, interacts with LAS17. Mg(2+) serves as cofactor. It depends on Mn(2+) as a cofactor.

Its subcellular location is the cell membrane. The protein resides in the vacuole membrane. The enzyme catalyses a 1,2-diacyl-sn-glycero-3-phospho-(1D-myo-inositol) + ATP = a 1,2-diacyl-sn-glycero-3-phospho-(1D-myo-inositol 4-phosphate) + ADP + H(+). In terms of biological role, may play a role in endocytic and/or exocytic pathways. The chain is Phosphatidylinositol 4-kinase LSB6 (LSB6) from Saccharomyces cerevisiae (strain ATCC 204508 / S288c) (Baker's yeast).